A 190-amino-acid polypeptide reads, in one-letter code: MKCIVGLGNIGKRFEQTRHNIGFEVIDFMLEQNRFSLDKQKFKGAYTIERLAGEKVMFIEPMTMMNLSGEAVAPLMKYYDIDIEDLIVLYDDLDLPQGEIRLRQKGSAGGHNGMKSIIQMLGTDQFKRIRIGVDRPSNGMAIVDYVLQKFSNQEMETMNKVIEHSARAIEAYIESNRFDRVMNEYNGEIK.

F14 lines the tRNA pocket. The Proton acceptor role is filled by H19. TRNA-binding residues include M64, N66, and N112.

It belongs to the PTH family. As to quaternary structure, monomer.

The protein resides in the cytoplasm. The catalysed reaction is an N-acyl-L-alpha-aminoacyl-tRNA + H2O = an N-acyl-L-amino acid + a tRNA + H(+). Functionally, hydrolyzes ribosome-free peptidyl-tRNAs (with 1 or more amino acids incorporated), which drop off the ribosome during protein synthesis, or as a result of ribosome stalling. Its function is as follows. Catalyzes the release of premature peptidyl moieties from peptidyl-tRNA molecules trapped in stalled 50S ribosomal subunits, and thus maintains levels of free tRNAs and 50S ribosomes. The polypeptide is Peptidyl-tRNA hydrolase (Staphylococcus saprophyticus subsp. saprophyticus (strain ATCC 15305 / DSM 20229 / NCIMB 8711 / NCTC 7292 / S-41)).